Consider the following 325-residue polypeptide: Natural cytotoxicity triggering receptor 1 (325 aa).

The signal sequence occupies residues 1–16 (MLPTLTALLCLGLCLS). The Extracellular segment spans residues 17–255 (QRINTEKETL…SAFWDHTTQN (239 aa)). Ig-like domains are found at residues 34-118 (KPSI…LVVT) and 129-211 (YPRP…LLIT). Residues C49 and C98 are joined by a disulfide bond. N139 carries N-linked (GlcNAc...) asparagine glycosylation. C144 and C190 are joined by a disulfide. N216 and N238 each carry an N-linked (GlcNAc...) asparagine glycan. Residues 256–273 (LIRIGLACIILITLVWLL) traverse the membrane as a helical segment. Residues 274–325 (TEDWLSKRKDHEEANRLTNWECRRRWRMQHYFEEEQRNAISMMELKATPGAL) lie on the Cytoplasmic side of the membrane.

This sequence belongs to the natural cytotoxicity receptor (NCR) family. As to quaternary structure, interacts with CD3Z and FCER1G. As to expression, selectively expressed by NK cells.

It is found in the cell membrane. Functionally, cytotoxicity-activating receptor that may contribute to the increased efficiency of activated natural killer (NK) cells to mediate tumor cell lysis. The sequence is that of Natural cytotoxicity triggering receptor 1 (Ncr1) from Mus musculus (Mouse).